Consider the following 314-residue polypeptide: Deoxymugineic acid synthase 1-D (314 aa).

The disordered stretch occupies residues 1-21 (MGAGEKTAAGMPRIGMGTAVQ). Residue aspartate 44 coordinates NADP(+). Tyrosine 49 acts as the Proton donor in catalysis. Residue histidine 112 participates in substrate binding. NADP(+) contacts are provided by residues 158 to 159 (AN), glutamine 180, 258 to 266 (FDEARMREN), and 273 to 281 (ELTEEERLR).

It belongs to the aldo/keto reductase family. Mostly expressed in root tissues, observed, at low levels, in mesocotyl and embryonic roots, seedling roots, crown and seedling leafes, mature bracts, anthers, pistil, caryopsis and embryos.

The catalysed reaction is 2'-deoxymugineate + NAD(+) = 3''-deamino-3''-oxonicotianamine + NADH + H(+). The enzyme catalyses 2'-deoxymugineate + NADP(+) = 3''-deamino-3''-oxonicotianamine + NADPH + H(+). It participates in siderophore biosynthesis. Catalyzes the reduction of a 3''-keto intermediate during the biosynthesis of 2'-deoxymugineic acid (DMA) from L-Met. Involved in the formation of phytosiderophores (MAs) belonging to the mugineic acid family and required to acquire iron. This chain is Deoxymugineic acid synthase 1-D, found in Triticum aestivum (Wheat).